We begin with the raw amino-acid sequence, 227 residues long: E3 ubiquitin-protein ligase ZNRF1 (227 aa).

The disordered stretch occupies residues 1 to 42 (MGGKQSTAARSRGPFPGVSTDDSAVPPPGGAPHFGHYRTGGG). Gly-2 carries N-myristoyl glycine lipidation. Positions 2–10 (GGKQSTAAR) are required for endosomal and lysosomal localization and myristoylation. Ser-50, Ser-52, and Ser-53 each carry phosphoserine. The tract at residues 68–105 (PFGLYTPASRGTGDSERAPGGGGSASDSTYAHGNGYQE) is disordered. Tyr-103 carries the phosphotyrosine; by SRC modification. Position 123 is a phosphoserine (Ser-123). An RING-type; atypical zinc finger spans residues 184 to 225 (CVICLEELLQGDTIARLPCLCIYHKSCIDSWFEVNRSCPEHP).

As to quaternary structure, interacts with AKT1, GLUL and TUBB2A. Interacts with ZNRF2. Interacts (via its RING domain) with UBE2N. Interacts (when phosphorylated) with YWHAE. Post-translationally, N-myristoylation targets ZNRF1 to intracellular membranes. In terms of processing, phosphorylated by SRC at Tyr-103; leading to 'Lys-63'-linked ubiquitination of TLR3, lysosomal trafficking and degradation. In terms of tissue distribution, expressed primarily in the nervous system, with expression higher in developing brain relative to adult. Expressed at low levels in testis and thymus.

Its subcellular location is the endosome. The protein localises to the lysosome. The protein resides in the membrane. It localises to the cytoplasmic vesicle. It is found in the secretory vesicle. Its subcellular location is the synaptic vesicle membrane. The enzyme catalyses S-ubiquitinyl-[E2 ubiquitin-conjugating enzyme]-L-cysteine + [acceptor protein]-L-lysine = [E2 ubiquitin-conjugating enzyme]-L-cysteine + N(6)-ubiquitinyl-[acceptor protein]-L-lysine.. Its pathway is protein modification; protein ubiquitination. Functionally, E3 ubiquitin-protein ligase that plays a role in different processes including cell differentiation, receptor recycling or regulation of inflammation. Mediates the ubiquitination of AKT1 and GLUL, thereby playing a role in neuron cells differentiation. Plays a role in the establishment and maintenance of neuronal transmission and plasticity. Regulates Schwann cells differentiation by mediating ubiquitination of GLUL. Promotes neurodegeneration by mediating 'Lys-48'-linked polyubiquitination and subsequent degradation of AKT1 in axons: degradation of AKT1 prevents AKT1-mediated phosphorylation of GSK3B, leading to GSK3B activation and phosphorylation of DPYSL2/CRMP2 followed by destabilization of microtubule assembly in axons. Ubiquitinates the Na(+)/K(+) ATPase alpha-1 subunit/ATP1A1 and thereby influences its endocytosis and/or degradation. Controls ligand-induced EGFR signaling via mediating receptor ubiquitination and recruitment of the ESCRT machinery. Acts as a negative feedback mechanism controlling TLR3 trafficking by mediating TLR3 'Lys-63'-linked polyubiquitination to reduce type I IFN production. Modulates inflammation by promoting caveolin-1/CAV1 ubiquitination and degradation to regulate TLR4-activated immune response. The polypeptide is E3 ubiquitin-protein ligase ZNRF1 (ZNRF1) (Homo sapiens (Human)).